A 417-amino-acid chain; its full sequence is Gamma-glutamyl phosphate reductase (417 aa).

The protein belongs to the gamma-glutamyl phosphate reductase family.

It localises to the cytoplasm. The enzyme catalyses L-glutamate 5-semialdehyde + phosphate + NADP(+) = L-glutamyl 5-phosphate + NADPH + H(+). It participates in amino-acid biosynthesis; L-proline biosynthesis; L-glutamate 5-semialdehyde from L-glutamate: step 2/2. Functionally, catalyzes the NADPH-dependent reduction of L-glutamate 5-phosphate into L-glutamate 5-semialdehyde and phosphate. The product spontaneously undergoes cyclization to form 1-pyrroline-5-carboxylate. The protein is Gamma-glutamyl phosphate reductase of Escherichia coli O157:H7.